A 232-amino-acid polypeptide reads, in one-letter code: Ubiquinone biosynthesis O-methyltransferase (232 aa).

Arginine 36, glycine 55, aspartate 76, and methionine 120 together coordinate S-adenosyl-L-methionine.

It belongs to the methyltransferase superfamily. UbiG/COQ3 family.

It carries out the reaction a 3-demethylubiquinol + S-adenosyl-L-methionine = a ubiquinol + S-adenosyl-L-homocysteine + H(+). It catalyses the reaction a 3-(all-trans-polyprenyl)benzene-1,2-diol + S-adenosyl-L-methionine = a 2-methoxy-6-(all-trans-polyprenyl)phenol + S-adenosyl-L-homocysteine + H(+). The protein operates within cofactor biosynthesis; ubiquinone biosynthesis. Functionally, O-methyltransferase that catalyzes the 2 O-methylation steps in the ubiquinone biosynthetic pathway. The chain is Ubiquinone biosynthesis O-methyltransferase from Burkholderia orbicola (strain MC0-3).